Here is a 282-residue protein sequence, read N- to C-terminus: N-acetylaspartate synthetase (282 aa).

Residues 103–125 traverse the membrane as a helical segment; it reads FLTVMCYVMTKSFTLTFCAPFIL. In terms of domain architecture, N-acetyltransferase spans 110–269; that stretch reads VMTKSFTLTF…RSPLERLFFQ (160 aa).

This sequence belongs to the NAT8 family.

Its subcellular location is the cytoplasm. The protein localises to the microsome membrane. It is found in the mitochondrion membrane. The protein resides in the endoplasmic reticulum membrane. It catalyses the reaction L-aspartate + acetyl-CoA = N-acetyl-L-aspartate + CoA + H(+). Functionally, catalyzes the synthesis of N-acetylaspartate acid (NAA) from L-aspartate and acetyl-CoA. In Danio rerio (Zebrafish), this protein is N-acetylaspartate synthetase (nat8l).